We begin with the raw amino-acid sequence, 406 residues long: 4-hydroxy-3-methylbut-2-en-1-yl diphosphate synthase (flavodoxin) (406 aa).

Residues cysteine 297, cysteine 300, cysteine 343, and glutamate 350 each contribute to the [4Fe-4S] cluster site.

This sequence belongs to the IspG family. [4Fe-4S] cluster is required as a cofactor.

It carries out the reaction (2E)-4-hydroxy-3-methylbut-2-enyl diphosphate + oxidized [flavodoxin] + H2O + 2 H(+) = 2-C-methyl-D-erythritol 2,4-cyclic diphosphate + reduced [flavodoxin]. Its pathway is isoprenoid biosynthesis; isopentenyl diphosphate biosynthesis via DXP pathway; isopentenyl diphosphate from 1-deoxy-D-xylulose 5-phosphate: step 5/6. Functionally, converts 2C-methyl-D-erythritol 2,4-cyclodiphosphate (ME-2,4cPP) into 1-hydroxy-2-methyl-2-(E)-butenyl 4-diphosphate. This Thermus thermophilus (strain ATCC 27634 / DSM 579 / HB8) protein is 4-hydroxy-3-methylbut-2-en-1-yl diphosphate synthase (flavodoxin).